A 454-amino-acid chain; its full sequence is Golgi reassembly-stacking protein 2 (454 aa).

G2 carries the N-myristoyl glycine lipid modification. 2 PDZ GRASP-type domains span residues 15–105 (EGYH…FCSF) and 111–199 (NVWH…YGYL). Residues 15-215 (EGYHVLRVQE…PFEEGKKISL (201 aa)) form a GRASP region. Dimethylated arginine occurs at positions 30 and 47. Residues 194 to 199 (IGYGYL) are important for membrane binding. The residue at position 214 (S214) is a Phosphoserine. At T222 the chain carries Phosphothreonine. Phosphothreonine; by MAPK is present on T225. The disordered stretch occupies residues 377 to 454 (EGSSAASAGE…VTDANASGAS (78 aa)). S411 is modified (phosphoserine). T435 is subject to Phosphothreonine. Phosphoserine occurs at positions 443 and 451.

It belongs to the GORASP family. In terms of assembly, homodimer. Homooligomer. ER stress induces phosphorylation-dependent monomerization. Interacts with BLZF1/Golgin 45. Identified in a complex with RAB2 and GORASP2. Interacts with JAM2 and JAM3. Interacts with members of the p24 cargo receptors. Interacts with CNIH1 and the cytoplasmic domain of transmembrane TGFA, prior its transit in the trans-Golgi. Interacts with KCTD5. Interacts with TMED2 and TMED3. Interacts with SEC16A in response to ER stress. Interacts (via PDZ GRASP-type 1 domain) with core-glycosylated CFTR in response to ER stress. Myristoylated. Myristoylation is essential for the Golgi targeting. In terms of processing, palmitoylated. Post-translationally, phosphorylated in mitotic cells. ER stress-induced phosphorylation at Ser-443 induces monomerization and subsequent relocalization from Golgi to ER which is essential for mediating unconventional (ER/Golgi-independent) trafficking of CFTR to the cell membrane. Detected in lung, brain, heart, liver and testis.

It is found in the golgi apparatus membrane. It localises to the endoplasmic reticulum membrane. The protein localises to the golgi apparatus. In terms of biological role, key structural protein of the Golgi apparatus. The membrane cisternae of the Golgi apparatus adhere to each other to form stacks, which are aligned side by side to form the Golgi ribbon. Acting in concert with GORASP1/GRASP65, is required for the formation and maintenance of the Golgi ribbon, and may be dispensable for the formation of stacks. However, other studies suggest that GORASP2 plays a role in the assembly and membrane stacking of the Golgi cisternae, and in the process by which Golgi stacks reform after breakdown during mitosis and meiosis. May regulate the intracellular transport and presentation of a defined set of transmembrane proteins, such as transmembrane TGFA. Required for normal acrosome formation during spermiogenesis and normal male fertility, probably by promoting colocalization of JAM2 and JAM3 at contact sites between germ cells and Sertoli cells. Mediates ER stress-induced unconventional (ER/Golgi-independent) trafficking of core-glycosylated CFTR to cell membrane. The protein is Golgi reassembly-stacking protein 2 (Gorasp2) of Rattus norvegicus (Rat).